We begin with the raw amino-acid sequence, 309 residues long: MILTVTLNPAIDVSYPLDELKCDTVNRVVDVTKTPGGKGLNVCRVLNDFGETVKATGCIGGESGDFIINHLPDSILSRFYKISGDTRTCIVILHEGNQTEILEKGPLLSVEEIDGFTHHFKYLLNDVDVVTLSGSLPAGMPDDYYQKLIGIANLNGKKTVLDCSGNALEAVLKGDSKPTVIKPNLEELSQLLGKEMTKDFEALKEVLQDELFEGIEWIIVSLGADGVFAKHNDTFYNVDIPKIEIVSAVGSGDSTVAGIASGLANDEDDRALLTKANVLGMLNAQEKTTGHVNMANYDKLYQSIKVKEV.

This sequence belongs to the carbohydrate kinase PfkB family. LacC subfamily.

The enzyme catalyses D-tagatofuranose 6-phosphate + ATP = D-tagatofuranose 1,6-bisphosphate + ADP + H(+). It functions in the pathway carbohydrate metabolism; D-tagatose 6-phosphate degradation; D-glyceraldehyde 3-phosphate and glycerone phosphate from D-tagatose 6-phosphate: step 1/2. The protein is Tagatose-6-phosphate kinase of Streptococcus pyogenes serotype M5 (strain Manfredo).